A 180-amino-acid polypeptide reads, in one-letter code: uncharacterized protein (180 aa).

The tract at residues 138-180 (SVMPVPMPQQNSDNGSTPHIVDSSKSKDKSSNDGDNGVFTGDE) is disordered. The span at 145-154 (PQQNSDNGST) shows a compositional bias: polar residues. Positions 159–169 (DSSKSKDKSSN) are enriched in basic and acidic residues.

This is an uncharacterized protein from Acidianus filamentous virus 2 (isolate Italy/Pozzuoli) (AFV-2).